The primary structure comprises 233 residues: Octanoyltransferase (233 aa).

In terms of domain architecture, BPL/LPL catalytic spans 34–212 (PDRPDVLLLL…AFAQTFELDL (179 aa)). Residues 76-83 (RGGEVTHH), 143-145 (AIG), and 156-158 (GFA) contribute to the substrate site. Cysteine 174 functions as the Acyl-thioester intermediate in the catalytic mechanism.

The protein belongs to the LipB family.

Its subcellular location is the cytoplasm. The catalysed reaction is octanoyl-[ACP] + L-lysyl-[protein] = N(6)-octanoyl-L-lysyl-[protein] + holo-[ACP] + H(+). It participates in protein modification; protein lipoylation via endogenous pathway; protein N(6)-(lipoyl)lysine from octanoyl-[acyl-carrier-protein]: step 1/2. Its function is as follows. Catalyzes the transfer of endogenously produced octanoic acid from octanoyl-acyl-carrier-protein onto the lipoyl domains of lipoate-dependent enzymes. Lipoyl-ACP can also act as a substrate although octanoyl-ACP is likely to be the physiological substrate. The chain is Octanoyltransferase from Synechococcus elongatus (strain ATCC 33912 / PCC 7942 / FACHB-805) (Anacystis nidulans R2).